The chain runs to 175 residues: Thioredoxin-like protein CITRX, chloroplastic (175 aa).

The N-terminal 64 residues, 1–64 (MQAASLAFHP…KPPAVGKYVR (64 aa)), are a transit peptide targeting the chloroplast. Residues 74–175 (AKEIQELIKG…MMRDIIDNDL (102 aa)) enclose the Thioredoxin domain. Residues cysteine 98 and cysteine 101 each act as nucleophile in the active site. Cysteines 98 and 101 form a disulfide.

It belongs to the thioredoxin family. Plant CITRX-type subfamily. Interacts with Cf-9 resistance protein.

It localises to the plastid. It is found in the chloroplast. Probable thiol-disulfide oxidoreductase that may play a role in proper chloroplast development. The polypeptide is Thioredoxin-like protein CITRX, chloroplastic (Solanum lycopersicum (Tomato)).